Here is a 428-residue protein sequence, read N- to C-terminus: Flap endonuclease 1-B (428 aa).

The interval 1–132 (MGIKGLTKVL…KELAKRSLKR (132 aa)) is N-domain. Asp-34 provides a ligand contact to Mg(2+). Residue Arg-98 coordinates DNA. The Mg(2+) site is built by Asp-114, Glu-186, Glu-188, Asp-207, and Asp-209. The tract at residues 150 to 281 (AVEKFSKRTV…QRALKLIRQH (132 aa)) is I-domain. Glu-186 provides a ligand contact to DNA. Positions 259 and 261 each coordinate DNA. Asp-261 contacts Mg(2+).

The protein belongs to the XPG/RAD2 endonuclease family. FEN1 subfamily. As to quaternary structure, interacts with PCNA. Three molecules of FEN1 bind to one PCNA trimer with each molecule binding to one PCNA monomer. PCNA stimulates the nuclease activity without altering cleavage specificity. It depends on Mg(2+) as a cofactor. Post-translationally, phosphorylated. Phosphorylation upon DNA damage induces relocalization to the nuclear plasma.

Its subcellular location is the nucleus. The protein resides in the nucleolus. It is found in the nucleoplasm. It localises to the mitochondrion. Functionally, structure-specific nuclease with 5'-flap endonuclease and 5'-3' exonuclease activities involved in DNA replication and repair. During DNA replication, cleaves the 5'-overhanging flap structure that is generated by displacement synthesis when DNA polymerase encounters the 5'-end of a downstream Okazaki fragment. It enters the flap from the 5'-end and then tracks to cleave the flap base, leaving a nick for ligation. Also involved in the long patch base excision repair (LP-BER) pathway, by cleaving within the apurinic/apyrimidinic (AP) site-terminated flap. Acts as a genome stabilization factor that prevents flaps from equilibrating into structures that lead to duplications and deletions. Also possesses 5'-3' exonuclease activity on nicked or gapped double-stranded DNA, and exhibits RNase H activity. Also involved in replication and repair of rDNA and in repairing mitochondrial DNA. The sequence is that of Flap endonuclease 1-B from Sorghum bicolor (Sorghum).